The following is a 302-amino-acid chain: Phospho-N-acetylmuramoyl-pentapeptide-transferase (302 aa).

Helical transmembrane passes span 1-21, 42-62, 67-87, 95-115, 123-143, 154-174, 178-198, 204-224, 229-249, and 279-299; these read MIAANFLLNLFLYPILIKLFR, GTPTMGGILFVLTGFLFGMIS, MVLLGMFLFFLIGFLDDFLSV, LKTYQKALLQTLAAFIMLLLI, FFGSTIEMGKWYYLFALLVIV, GLDGLAGWIYVSGSIPYWFFL, GVSEDILLILGVGVLAFLVFN, IFMGDTGSITLGGVLGTVSVL, FYLVLFFMIPVIETLSVILQV, and IVAVFTVFNLISSLVALEIFG.

It belongs to the glycosyltransferase 4 family. MraY subfamily. Requires Mg(2+) as cofactor.

It localises to the cell inner membrane. It carries out the reaction UDP-N-acetyl-alpha-D-muramoyl-L-alanyl-gamma-D-glutamyl-meso-2,6-diaminopimeloyl-D-alanyl-D-alanine + di-trans,octa-cis-undecaprenyl phosphate = di-trans,octa-cis-undecaprenyl diphospho-N-acetyl-alpha-D-muramoyl-L-alanyl-D-glutamyl-meso-2,6-diaminopimeloyl-D-alanyl-D-alanine + UMP. The protein operates within cell wall biogenesis; peptidoglycan biosynthesis. Functionally, catalyzes the initial step of the lipid cycle reactions in the biosynthesis of the cell wall peptidoglycan: transfers peptidoglycan precursor phospho-MurNAc-pentapeptide from UDP-MurNAc-pentapeptide onto the lipid carrier undecaprenyl phosphate, yielding undecaprenyl-pyrophosphoryl-MurNAc-pentapeptide, known as lipid I. This is Phospho-N-acetylmuramoyl-pentapeptide-transferase from Thermotoga maritima (strain ATCC 43589 / DSM 3109 / JCM 10099 / NBRC 100826 / MSB8).